A 64-amino-acid polypeptide reads, in one-letter code: Large ribosomal subunit protein bL35 (64 aa).

This sequence belongs to the bacterial ribosomal protein bL35 family.

The chain is Large ribosomal subunit protein bL35 from Vibrio vulnificus (strain CMCP6).